A 665-amino-acid chain; its full sequence is Long chain acyl-CoA synthetase 2 (665 aa).

228-239 is a binding site for ATP; the sequence is IMYTSGTTGEPK. The interval 496–520 is fatty acid-binding; the sequence is DGWFHTGDIGEWQEDGSMKIIDRKK.

It belongs to the ATP-dependent AMP-binding enzyme family. Mg(2+) serves as cofactor. As to expression, expressed along the entire length of the stem, but expression was not entirely epidermal specific, with some expression found in internal cell layers as well. Was expressed in leave epidermal cells, flowers (sepals, petals, stamens, filaments and carpel), siliques and developing seeds. In roots, expression was detected in an internal cell layer, probably the endodermal layer.

The protein localises to the endoplasmic reticulum. It catalyses the reaction a long-chain fatty acid + ATP + CoA = a long-chain fatty acyl-CoA + AMP + diphosphate. The protein operates within lipid metabolism; fatty acid metabolism. Activation of long-chain fatty acids for both synthesis of cellular lipids, and degradation via beta-oxidation. Acts in the cutin pathway. Preferentially uses palmitate, palmitoleate, oleate and linoleate. Required for repression of lateral root formation through its role in cutin biosynthesis and subsequent aerial tissues permeability. The sequence is that of Long chain acyl-CoA synthetase 2 (LACS2) from Arabidopsis thaliana (Mouse-ear cress).